The chain runs to 81 residues: MSHAVKIYDTCIGCTQCVRACPLDVLEMVPWDGCKAAQIASSPRTEDCVGCKRCETACPTDFLSIRVYLGDETTRSMGLAY.

4Fe-4S ferredoxin-type domains lie at 2–31 (SHAV…MVPW) and 39–68 (IASS…IRVY). Positions 11, 14, 17, 21, 48, 51, 54, and 58 each coordinate [4Fe-4S] cluster.

In terms of assembly, the cyanobacterial PSI reaction center is composed of one copy each of PsaA,B,C,D,E,F,I,J,K,L,M and X, and forms trimeric complexes. Requires [4Fe-4S] cluster as cofactor.

It is found in the cellular thylakoid membrane. It catalyses the reaction reduced [plastocyanin] + hnu + oxidized [2Fe-2S]-[ferredoxin] = oxidized [plastocyanin] + reduced [2Fe-2S]-[ferredoxin]. Apoprotein for the two 4Fe-4S centers FA and FB of photosystem I (PSI); essential for photochemical activity. FB is the terminal electron acceptor of PSI, donating electrons to ferredoxin. The C-terminus interacts with PsaA/B/D and helps assemble the protein into the PSI complex. Required for binding of PsaD and PsaE to PSI. PSI is a plastocyanin/cytochrome c6-ferredoxin oxidoreductase, converting photonic excitation into a charge separation, which transfers an electron from the donor P700 chlorophyll pair to the spectroscopically characterized acceptors A0, A1, FX, FA and FB in turn. The chain is Photosystem I iron-sulfur center from Prochlorococcus marinus (strain MIT 9211).